Here is a 243-residue protein sequence, read N- to C-terminus: tRNA (guanine-N(1)-)-methyltransferase (243 aa).

Residues G108 and 127-132 each bind S-adenosyl-L-methionine; that span reads LGDYVL.

It belongs to the RNA methyltransferase TrmD family. Homodimer.

The protein resides in the cytoplasm. The catalysed reaction is guanosine(37) in tRNA + S-adenosyl-L-methionine = N(1)-methylguanosine(37) in tRNA + S-adenosyl-L-homocysteine + H(+). Specifically methylates guanosine-37 in various tRNAs. This chain is tRNA (guanine-N(1)-)-methyltransferase, found in Streptococcus gordonii (strain Challis / ATCC 35105 / BCRC 15272 / CH1 / DL1 / V288).